Consider the following 860-residue polypeptide: LPS-assembly protein LptD (860 aa).

The signal sequence occupies residues 1–21 (MTKRYFSLLAVCSAIATSTFA).

The protein belongs to the LptD family. In terms of assembly, component of the lipopolysaccharide transport and assembly complex. Interacts with LptE and LptA.

The protein localises to the cell outer membrane. Its function is as follows. Together with LptE, is involved in the assembly of lipopolysaccharide (LPS) at the surface of the outer membrane. This Saccharophagus degradans (strain 2-40 / ATCC 43961 / DSM 17024) protein is LPS-assembly protein LptD.